Here is a 149-residue protein sequence, read N- to C-terminus: 3-hydroxyacyl-[acyl-carrier-protein] dehydratase FabZ (149 aa).

His-48 is a catalytic residue.

The protein belongs to the thioester dehydratase family. FabZ subfamily.

The protein localises to the cytoplasm. The enzyme catalyses a (3R)-hydroxyacyl-[ACP] = a (2E)-enoyl-[ACP] + H2O. Functionally, involved in unsaturated fatty acids biosynthesis. Catalyzes the dehydration of short chain beta-hydroxyacyl-ACPs and long chain saturated and unsaturated beta-hydroxyacyl-ACPs. The polypeptide is 3-hydroxyacyl-[acyl-carrier-protein] dehydratase FabZ (Thermomicrobium roseum (strain ATCC 27502 / DSM 5159 / P-2)).